The following is a 618-amino-acid chain: MKQSKLLIPTLREMPSDAQVISHALMVRAGYVRQVSAGIYAYLPLANRTIEKFKTIMREEFEKIGAVEMLAPALLTADLWRESGRYETYGEDLYKLKNRDNSDFILGPTHEETFTTLVRDAVKSYKQLPLNLYQIQSKYRDEKRPRNGLLRTREFIMKDGYSFHHNYEDLDVTYEDYRQAYEAIFTRAGLDFKGIIGDGGAMGGKDSQEFMAITPARTDLDRWVVLDKSIASMDDIPKEVLEEIKAELAAWMISGEDTIAYSTESSYAANLEMATNEYKPSSKVAAEDALAEVETPHCKTIDEVAAFLSVDETQTIKTLLFVADNEPVVALLVGNDHINTVKLKNYLAADFLEPASEEEARAFFGAGFGSLGPVNLAQGSRIVADRKVQNLTNAVAGANKDGFHVTGVNPGRDFQAEYVDIREVKEGEMSPDGHGVLQFARGIEVGHIFKLGTRYSDSMGATILDENGRTVPIVMGCYGIGVSRILSAVIEQHARLFVNKTPKGDYRYAWGINFPKELAPFDVHLITVNVKDQVAQDLTAKLEADLMAKGYDVLTDDRNERVGSKFSDSDLIGLPIRVTVGKKAAEGIVEIKIKATGDSIEVNAENLIETLEILTKEH.

This sequence belongs to the class-II aminoacyl-tRNA synthetase family. ProS type 1 subfamily. As to quaternary structure, homodimer.

The protein resides in the cytoplasm. It carries out the reaction tRNA(Pro) + L-proline + ATP = L-prolyl-tRNA(Pro) + AMP + diphosphate. Its function is as follows. Catalyzes the attachment of proline to tRNA(Pro) in a two-step reaction: proline is first activated by ATP to form Pro-AMP and then transferred to the acceptor end of tRNA(Pro). As ProRS can inadvertently accommodate and process non-cognate amino acids such as alanine and cysteine, to avoid such errors it has two additional distinct editing activities against alanine. One activity is designated as 'pretransfer' editing and involves the tRNA(Pro)-independent hydrolysis of activated Ala-AMP. The other activity is designated 'posttransfer' editing and involves deacylation of mischarged Ala-tRNA(Pro). The misacylated Cys-tRNA(Pro) is not edited by ProRS. This is Proline--tRNA ligase from Streptococcus pyogenes serotype M4 (strain MGAS10750).